The sequence spans 379 residues: Chaperone protein DnaJ (379 aa).

The J domain occupies 5–70 (DYYEVLGVEK…QKRAAYDQYG (66 aa)). A CR-type zinc finger spans residues 133–211 (GKSVEIRVPT…CHGQGRVEKT (79 aa)). Zn(2+)-binding residues include cysteine 146, cysteine 149, cysteine 163, cysteine 166, cysteine 185, cysteine 188, cysteine 199, and cysteine 202. CXXCXGXG motif repeat units lie at residues 146–153 (CDTCDGSG), 163–170 (CTTCHGQG), 185–192 (CPTCGGKG), and 199–206 (CDVCHGQG).

It belongs to the DnaJ family. In terms of assembly, homodimer. Zn(2+) serves as cofactor.

The protein localises to the cytoplasm. In terms of biological role, participates actively in the response to hyperosmotic and heat shock by preventing the aggregation of stress-denatured proteins and by disaggregating proteins, also in an autonomous, DnaK-independent fashion. Unfolded proteins bind initially to DnaJ; upon interaction with the DnaJ-bound protein, DnaK hydrolyzes its bound ATP, resulting in the formation of a stable complex. GrpE releases ADP from DnaK; ATP binding to DnaK triggers the release of the substrate protein, thus completing the reaction cycle. Several rounds of ATP-dependent interactions between DnaJ, DnaK and GrpE are required for fully efficient folding. Also involved, together with DnaK and GrpE, in the DNA replication of plasmids through activation of initiation proteins. This chain is Chaperone protein DnaJ, found in Pseudoalteromonas atlantica (strain T6c / ATCC BAA-1087).